The following is a 523-amino-acid chain: Cilia- and flagella-associated protein 157 (523 aa).

Positions methionine 1–proline 31 are disordered. Residues glycine 10–serine 26 are compositionally biased toward basic and acidic residues. Residue threonine 30 is modified to Phosphothreonine. 3 coiled-coil regions span residues glutamate 32 to lysine 191, valine 248 to threonine 274, and glycine 302 to glutamine 371. Residues glutamine 419–isoleucine 440 are disordered. The segment covering glutamine 429–isoleucine 440 has biased composition (polar residues).

Belongs to the CFAP157 family. As to quaternary structure, interacts with TUBB and TUBA4A. Interacts with CEP350. As to expression, specifically expressed in tissues containing motile cilia.

It is found in the cytoplasm. The protein localises to the cytoskeleton. Its subcellular location is the cilium basal body. Functionally, specifically required during spermatogenesis for flagellum morphogenesis and sperm motility. May be required to suppress the formation of supernumerary axonemes and ensure a correct ultrastructure. This Mus musculus (Mouse) protein is Cilia- and flagella-associated protein 157.